A 298-amino-acid polypeptide reads, in one-letter code: N-acetylmuramic acid 6-phosphate etherase (298 aa).

The region spanning 55-218 (IHAQVSGGGR…STGLMIKSGK (164 aa)) is the SIS domain. Glutamate 83 acts as the Proton donor in catalysis. Glutamate 114 is a catalytic residue.

It belongs to the GCKR-like family. MurNAc-6-P etherase subfamily. Homodimer.

It carries out the reaction N-acetyl-D-muramate 6-phosphate + H2O = N-acetyl-D-glucosamine 6-phosphate + (R)-lactate. It participates in amino-sugar metabolism; 1,6-anhydro-N-acetylmuramate degradation. The protein operates within amino-sugar metabolism; N-acetylmuramate degradation. It functions in the pathway cell wall biogenesis; peptidoglycan recycling. Specifically catalyzes the cleavage of the D-lactyl ether substituent of MurNAc 6-phosphate, producing GlcNAc 6-phosphate and D-lactate. Together with AnmK, is also required for the utilization of anhydro-N-acetylmuramic acid (anhMurNAc) either imported from the medium or derived from its own cell wall murein, and thus plays a role in cell wall recycling. The protein is N-acetylmuramic acid 6-phosphate etherase of Shigella boydii serotype 18 (strain CDC 3083-94 / BS512).